Here is a 433-residue protein sequence, read N- to C-terminus: Steroid hormone receptor ERR2 (433 aa).

Positions 1–41 (MSSEDRHLGSSCGSFIKTEPSSPSSGIDALSHHSPSGSSDA) are disordered. Over residues 32-41 (HHSPSGSSDA) the composition is skewed to low complexity. Residues 93 to 211 (YMLNAIPKRL…SPPAKKPLTK (119 aa)) form an interaction with NANOG region. A DNA-binding region (nuclear receptor) is located at residues 100-186 (KRLCLVCGDI…RVRGGRQKYK (87 aa)). 2 NR C4-type zinc fingers span residues 103 to 123 (CLVC…CEAC) and 139 to 163 (CPAT…FMKC). Residues 203 to 433 (PPAKKPLTKI…LFLEMLEAKV (231 aa)) form an essential for ESRRB transcriptional activity and interaction with NCOA3 region. Residues 208-432 (PLTKIVSYLL…KLFLEMLEAK (225 aa)) form the NR LBD domain.

It belongs to the nuclear hormone receptor family. NR3 subfamily. As to quaternary structure, binds DNA as a monomer. Interacts with NR0B1; represses ESRRB activity at the GATA6 promoter. Interacts with NANOG; reciprocally modulates their transcriptional activities and activates POU5F1 expression. Interacts with NCOA3; mediates the interaction between ESRRB and RNA polymerase II complexes and allows NCOA3 corecruitment to ESRRB, KLF4, NANOG, and SOX2 enhancer regions to trigger ESRRB-dependent gene activation involved in self-renewal and pluripotency. Interacts with KDM1A; co-occupes the core set of ESRRB targets including ELF5 and EOMES. Interacts with the multiprotein complex Integrator, at least composed of INTS1, INTS2, INTS3, INTS4, INTS5, INTS6, INTS7, INTS8, INTS9/RC74, INTS10, INTS11/CPSF3L and INTS12; ESRRB is probably not a core component of the integrator complex and associates to integrator via its interaction with INTS1 and INTS9; attracts the transcriptional machinery. Interacts with JARID2. Interacts with POU5F1; recruits ESRRB near the POU5F1-SOX2 element in the NANOG proximal promoter leading to activation of NANOG expression; the interaction is DNA independent. In terms of processing, acetylated by PCAF/KAT2 (in vitro).

It is found in the nucleus. It localises to the cytoplasm. The protein localises to the chromosome. Its function is as follows. Transcription factor that binds a canonical ESRRB recognition (ERRE) sequence 5'TCAAGGTCA-3' localized on promoter and enhancer of targets genes regulating their expression or their transcription activity. Plays a role, in a LIF independent manner, in maintainance of self-renewal and pluripotency of embryonic and trophoblast stem cells through different signaling pathways including FGF signaling pathway and Wnt signaling pathways. Involved in morula development (2-16 cells embryos) by acting as a regulator at the 8-cell stage. Upon FGF signaling pathway activation, interacts with KDM1A by directly binding to enhancer site of ELF5 and EOMES and activating their transcription leading to self-renewal of trophoblast stem cells. Also regulates expression of multiple rod-specific genes and is required for survival of this cell type. Plays a role as transcription factor activator of GATA6, NR0B1, POU5F1 and PERM1. Plays a role as transcription factor repressor of NFE2L2 transcriptional activity and ESR1 transcriptional activity. During mitosis remains bound to a subset of interphase target genes, including pluripotency regulators, through the canonical ESRRB recognition (ERRE) sequence, leading to their transcriptional activation in early G1 phase. Can coassemble on structured DNA elements with other transcription factors like SOX2, POU5F1, KDM1A and NCOA3 to trigger ESRRB-dependent gene activation. This mechanism, in the case of SOX2 corecruitment prevents the embryonic stem cells (ESCs) to epiblast stem cells (EpiSC) transition through positive regulation of NR0B1 that inhibits the EpiSC transcriptional program. Also plays a role inner ear development by controlling expression of ion channels and transporters and in early placentation. This is Steroid hormone receptor ERR2 from Rattus norvegicus (Rat).